Consider the following 380-residue polypeptide: Transcription factor Sox-17-alpha-A (380 aa).

2 disordered regions span residues 1 to 20 (MSSPDGGYASDDQNQGKCSV) and 40 to 59 (GEGKLKSDAGSANSRSKAEA). Residues 61 to 129 (IRRPMNAFMV…QHMQDHPNYK (69 aa)) constitute a DNA-binding region (HMG box). The Sox C-terminal domain occupies 264-379 (VSPVQGMMAC…TAVYYCNYPS (116 aa)). The disordered stretch occupies residues 292-312 (HHQLHQAGQPSPPPEAQQMGR). A 9aaTAD motif is present at residues 328–336 (TEFEQYLSY). A required for transcriptional activity and interaction with ctnnb1 region spans residues 329–334 (EFEQYL).

As to quaternary structure, interacts (via C-terminus) with ctnnb1/beta-catenin (via Armadillo repeats); this interaction is required for inhibition of wnt-signaling. In terms of tissue distribution, in early gastrulae, expressed in the vegetal but not animal hemisphere. The vegetal region is fated to become endoderm, and endodermal expression continues throughout gastrulation and neurulation. At tailbud stages, expression is down-regulated and becomes restricted to the most posterior endoderm and the future liver/gall bladder region. By 3-7 days, endodermal expression is restricted to the gall bladder bud. Also expressed in the embryonic gut, with strong expression in the posterior gut during tailbud stages, but by stage 40, expression rises again in the anterior gut. Expressed at a low level in the adult kidney and spleen.

The protein resides in the nucleus. Transcriptional activator. Binds to the DNA sequence 5'-AACAAT-3'. All of the sox17 proteins are required for embryonic endoderm development and gastrulation movements, and show some redundancy in function. In addition, the sox17 proteins have distinct but overlapping roles in later gut development. Acts downstream of vegt-signaling in endoderm differentiation to induce a range of endodermal genes both directly (including endodermin and dhh/chh) and indirectly. Also represses wnt-responsive genes to inhibit wnt/beta-catenin signaling. In Xenopus laevis (African clawed frog), this protein is Transcription factor Sox-17-alpha-A (sox17a-a).